We begin with the raw amino-acid sequence, 397 residues long: Phosphoglycerate kinase (397 aa).

Residues 25-27 (DLN), Arg41, 64-67 (HLGR), Arg118, and Arg151 contribute to the substrate site. ATP is bound by residues Lys202, Glu324, and 350-353 (GGDT).

Belongs to the phosphoglycerate kinase family. In terms of assembly, monomer.

It is found in the cytoplasm. It catalyses the reaction (2R)-3-phosphoglycerate + ATP = (2R)-3-phospho-glyceroyl phosphate + ADP. The protein operates within carbohydrate degradation; glycolysis; pyruvate from D-glyceraldehyde 3-phosphate: step 2/5. This Acidovorax sp. (strain JS42) protein is Phosphoglycerate kinase.